The primary structure comprises 943 residues: Isoleucine--tRNA ligase (943 aa).

The short motif at 58–68 is the 'HIGH' region element; that stretch reads PYANGSIHIGH. Residue Glu567 participates in L-isoleucyl-5'-AMP binding. The 'KMSKS' region motif lies at 608-612; sequence KMSKS. Residue Lys611 participates in ATP binding. Zn(2+) contacts are provided by Cys906, Cys909, Cys926, and Cys929.

It belongs to the class-I aminoacyl-tRNA synthetase family. IleS type 1 subfamily. In terms of assembly, monomer. Requires Zn(2+) as cofactor.

The protein resides in the cytoplasm. It catalyses the reaction tRNA(Ile) + L-isoleucine + ATP = L-isoleucyl-tRNA(Ile) + AMP + diphosphate. In terms of biological role, catalyzes the attachment of isoleucine to tRNA(Ile). As IleRS can inadvertently accommodate and process structurally similar amino acids such as valine, to avoid such errors it has two additional distinct tRNA(Ile)-dependent editing activities. One activity is designated as 'pretransfer' editing and involves the hydrolysis of activated Val-AMP. The other activity is designated 'posttransfer' editing and involves deacylation of mischarged Val-tRNA(Ile). This is Isoleucine--tRNA ligase from Ectopseudomonas mendocina (strain ymp) (Pseudomonas mendocina).